A 658-amino-acid chain; its full sequence is MQLKNFYPKMSVLGIATVMALTACGDENTQALFANNPVPGAENQVPVSSSDMSPTSSDAVIDPTSSSAAVVDPSTLPAEGPITMPEGLGTLVDDFEDGDNLSKIGDYWYTYNDNDNGGASIITTPLNEEENIIPGRVNNGSNYALQVNYTLDRGDYEYDPYVGWGVQVAPDEANGHFGGLTYWYKGGAHEVHIEITDVEDYDVHLAKFPASRTWKQAVVRFKDLVQGGWGKEIPFDAKHIMAISFQAKGNKSKLVTDSLFIDNIYLQDSSEVEKDQPDMEIKDPVIPVVEFTEAEITVTNPLQEKAMKYLNKGVNFTNWLENADGKFKSFELGESDVKILADNGFKSLRLPIDLDLYATNRDAFIAGTDTELKFDDDTLFLVLDSFVEWTAKYNMSFVIDYHEYDNSYNTTSAKDPNYIKMMAETWKHVAAHYAESPREDLFFELLNEPDMSDGKVTAATWTTAAQAMIDAIRTVDTKHTILFGDAQWYSITLLAKRTPFTDDNIIYVIHTYEPFAFTHQGGSWTDYATIHDIPFPYDPAKWSTVSGDFGVNKSTKSYVKTNIKNYYKTGSKEAILEQILKAKKWAATNNVPVIINEFGALNLRSTAESRLNYLTAMREICDTLQIPWTHWGYTGNFSVIENGKLIEGLDKALGVGSK.

The signal sequence occupies residues 1 to 23; the sequence is MQLKNFYPKMSVLGIATVMALTA. Cys-24 carries the N-palmitoyl cysteine lipid modification. Cys-24 carries the S-diacylglycerol cysteine lipid modification. A propeptide spanning residues 24–265 is cleaved from the precursor; the sequence is CGDENTQALF…TDSLFIDNIY (242 aa). Residues 42 to 83 form a disordered region; sequence ENQVPVSSSDMSPTSSDAVIDPTSSSAAVVDPSTLPAEGPIT. The segment covering 45–58 has biased composition (low complexity); it reads VPVSSSDMSPTSSD. Residues 87 to 277 enclose the CBM11 domain; that stretch reads GLGTLVDDFE…DSSEVEKDQP (191 aa). Catalysis depends on Glu-448, which acts as the Proton donor. Glu-597 functions as the Nucleophile in the catalytic mechanism.

This sequence belongs to the glycosyl hydrolase 5 (cellulase A) family. In terms of assembly, monomer. May be a lipoprotein and may be glycosylated.

It is found in the membrane. It catalyses the reaction Endohydrolysis of (1-&gt;4)-beta-D-glucosidic linkages in cellulose, lichenin and cereal beta-D-glucans.. Functionally, exhibits both endoglucanase and cellobiosidase activities. This Fibrobacter succinogenes (strain ATCC 19169 / S85) protein is Endoglucanase 3 (cel-3).